A 236-amino-acid chain; its full sequence is Uridylate kinase (236 aa).

Position 10 to 13 (10 to 13) interacts with ATP; the sequence is KLSG. G52 is a UMP binding site. ATP contacts are provided by G53 and R57. UMP contacts are provided by residues D72 and 133–140; that span reads TGNPFFTT. ATP is bound by residues T160, Y166, and D169.

The protein belongs to the UMP kinase family. In terms of assembly, homohexamer.

Its subcellular location is the cytoplasm. The catalysed reaction is UMP + ATP = UDP + ADP. Its pathway is pyrimidine metabolism; CTP biosynthesis via de novo pathway; UDP from UMP (UMPK route): step 1/1. With respect to regulation, inhibited by UTP. Functionally, catalyzes the reversible phosphorylation of UMP to UDP. This chain is Uridylate kinase, found in Polaromonas sp. (strain JS666 / ATCC BAA-500).